A 312-amino-acid polypeptide reads, in one-letter code: MSNAPRHFLDLDEMPTKELRAVLDAGVALKAKLKSQKARNTLREKPLEGKTLAMIFERPSTRTRVSFDVGMRQLGGESIMLTGAEMQLGRGETIADTARVLSRYVDAIMIRILNHDALLELAEFATVPVINGLTRRSHPCQVMADLMTFEEHRGPIEGRTIAWTGDDNNVLASWAHAAERFNFTLRIATPPELAPGKPMRDWIKSSGASIVLGTDPEEAVRGADCVLTDTWVSMGDKDGEHRHNLLKPYQVNTQLMSLAKPDALFMHCLPAHRGEEVTDEVIDGPQSVVFDEAENRLHAQKGILAWCFGAVG.

Carbamoyl phosphate is bound by residues 60-63, glutamine 87, arginine 111, and 138-141; these read STRT and HPCQ. Residues asparagine 169, aspartate 229, and 233–234 each bind L-ornithine; that span reads SM. Carbamoyl phosphate contacts are provided by residues 268-269 and arginine 296; that span reads CL.

It belongs to the aspartate/ornithine carbamoyltransferase superfamily. OTCase family.

It localises to the cytoplasm. It carries out the reaction carbamoyl phosphate + L-ornithine = L-citrulline + phosphate + H(+). It participates in amino-acid biosynthesis; L-arginine biosynthesis; L-arginine from L-ornithine and carbamoyl phosphate: step 1/3. Reversibly catalyzes the transfer of the carbamoyl group from carbamoyl phosphate (CP) to the N(epsilon) atom of ornithine (ORN) to produce L-citrulline. This is Ornithine carbamoyltransferase from Rhodopseudomonas palustris (strain BisA53).